Here is a 387-residue protein sequence, read N- to C-terminus: 8-amino-7-oxononanoate synthase (387 aa).

109–110 contacts pyridoxal 5'-phosphate; sequence GY. His134 contacts substrate. Residues Ser182, His214, and Thr242 each contribute to the pyridoxal 5'-phosphate site. Lys245 is subject to N6-(pyridoxal phosphate)lysine. Thr359 lines the substrate pocket.

Belongs to the class-II pyridoxal-phosphate-dependent aminotransferase family. BioF subfamily. In terms of assembly, homodimer. The cofactor is pyridoxal 5'-phosphate.

The catalysed reaction is 6-carboxyhexanoyl-[ACP] + L-alanine + H(+) = (8S)-8-amino-7-oxononanoate + holo-[ACP] + CO2. The protein operates within cofactor biosynthesis; biotin biosynthesis. In terms of biological role, catalyzes the decarboxylative condensation of pimeloyl-[acyl-carrier protein] and L-alanine to produce 8-amino-7-oxononanoate (AON), [acyl-carrier protein], and carbon dioxide. The protein is 8-amino-7-oxononanoate synthase of Haemophilus ducreyi (strain 35000HP / ATCC 700724).